A 261-amino-acid chain; its full sequence is Small ribosomal subunit protein uS2 (261 aa).

Belongs to the universal ribosomal protein uS2 family.

This Rhodospirillum centenum (strain ATCC 51521 / SW) protein is Small ribosomal subunit protein uS2.